The following is a 615-amino-acid chain: Sterol 3-beta-glucosyltransferase UGT80B1 (615 aa).

Residues 1–54 (MASNVFDHPLQELEGEDNGVKSEKASLLETSGSVDTTPEDSGHRSSDGHRGLDH) are disordered. The segment covering 40 to 54 (DSGHRSSDGHRGLDH) has biased composition (basic and acidic residues).

Belongs to the glycosyltransferase 28 family. Expressed in developing seeds, seedlings, leaves and around the apical tip of cotyledons. In embryo, expressed in the seed coat and cotyledons.

It carries out the reaction a sterol + UDP-alpha-D-glucose = a sterol 3-beta-D-glucoside + UDP + H(+). In terms of biological role, involved in the biosynthesis of sterol glucosides. Catalyzes the synthesis of steryl glycosides (SGs) and acyl steryl glycosides (ASGs) which are the most abundant sterol derivatives in higher plants. Can act on several sterols like sitosterol, campesterol and stigmasterol. Is required for embryonic development, seed suberin accumulation, cutin formation and flavanoid accumulation in the seed coat. Both UGT80A2 and UGT80B1 are required for the normal production of SGs and ASGs in seeds. The protein is Sterol 3-beta-glucosyltransferase UGT80B1 of Arabidopsis thaliana (Mouse-ear cress).